The primary structure comprises 344 residues: Methionine import ATP-binding protein MetN (344 aa).

An ABC transporter domain is found at 2–241 (IELQGLSQRF…PQHEVTRAMI (240 aa)). 38-45 (GRSGAGKS) contacts ATP.

The protein belongs to the ABC transporter superfamily. Methionine importer (TC 3.A.1.24) family. In terms of assembly, the complex is composed of two ATP-binding proteins (MetN), two transmembrane proteins (MetI) and a solute-binding protein (MetQ).

It is found in the cell inner membrane. The enzyme catalyses L-methionine(out) + ATP + H2O = L-methionine(in) + ADP + phosphate + H(+). It carries out the reaction D-methionine(out) + ATP + H2O = D-methionine(in) + ADP + phosphate + H(+). In terms of biological role, part of the ABC transporter complex MetNIQ involved in methionine import. Responsible for energy coupling to the transport system. The polypeptide is Methionine import ATP-binding protein MetN (Cupriavidus metallidurans (strain ATCC 43123 / DSM 2839 / NBRC 102507 / CH34) (Ralstonia metallidurans)).